Consider the following 817-residue polypeptide: MEEKKGEPLFGKVVPLPLVEEIKHSYLDYAMSVIVGRALPDARDGLKPVQRRILYAMMELGLRHNTAYKKSARVVGETMGKYHPHGDSAIYDTMVRMAQDFSMRYPLVDGQGNFGSIDGDPAAAMRYTEARLYEIGELMLADIDQDTVDWGPNFDESLQEPLCLPAMLPNLLINGSSGIAVGMATNIPPHNLVEVVDALCYLIDTEPEQVDIGEILFRMPGPDFPTGGLILGRDGIIDAYRTGRGKITMRGRTHIEEGKRGKTFIVITEIPYMVNKTNLIETIAKNVQDKTIDGVMDLRDESDREGLRIVIEVNRDTDPNLVLRQLYRRTQLQSTFGVINLALIDGYPKELSIEEMLNIFLNHRRSVVRRRTQFRLEKAEARAHIVEGLVKALDIIDEVIALIRGSATTEEAKEGLISKLDFSEAQAQAILEMRLQRLTGLEREKLEAELAQLLSDIERYQTILGNPKVLDSVIKEELLEVKRRFGNERKTEIIDAVEDVSIEDLIPESDIVVVLSRDGYLRRKDLQEYTLQGRGGKGRKGTALQEEDEVALVAVTSTHRDIYLFTSKGRVLALKGYVIPESKTGRGKLINRFVALEEGERVVTMHGRAVDGAKYAFFITLRGTAKRLDLSELENLTRAGRRVMGLDEGDEISQIVLTSGDDHLLIVTAQGQALRTHESEFRPMGRTARGVRGIRLRKNDYVIGCDVVANGRWPLLLSENGFGKRTKYDEFSLRHRGGSGVIVMNLSDRTGLIVGCWSVAEGDEIVAITSRGRMIRLAVSESPVLGRTAMGSIMMRLDEGDTVATASVVSTEDGEDD.

Residues 39–505 (LPDARDGLKP…AVEDVSIEDL (467 aa)) form the Topo IIA-type catalytic domain. Catalysis depends on tyrosine 127, which acts as the O-(5'-phospho-DNA)-tyrosine intermediate. Positions 532–538 (QGRGGKG) match the GyrA-box motif.

This sequence belongs to the type II topoisomerase GyrA/ParC subunit family. In terms of assembly, heterotetramer, composed of two GyrA and two GyrB chains. In the heterotetramer, GyrA contains the active site tyrosine that forms a transient covalent intermediate with DNA, while GyrB binds cofactors and catalyzes ATP hydrolysis.

The protein localises to the cytoplasm. The catalysed reaction is ATP-dependent breakage, passage and rejoining of double-stranded DNA.. Its function is as follows. A type II topoisomerase that negatively supercoils closed circular double-stranded (ds) DNA in an ATP-dependent manner to modulate DNA topology and maintain chromosomes in an underwound state. Negative supercoiling favors strand separation, and DNA replication, transcription, recombination and repair, all of which involve strand separation. Also able to catalyze the interconversion of other topological isomers of dsDNA rings, including catenanes and knotted rings. Type II topoisomerases break and join 2 DNA strands simultaneously in an ATP-dependent manner. This is DNA gyrase subunit A from Aminobacterium colombiense (strain DSM 12261 / ALA-1).